We begin with the raw amino-acid sequence, 887 residues long: Pyruvate dehydrogenase E1 component (887 aa).

As to quaternary structure, homodimer. Part of the PDH complex, consisting of multiple copies of pyruvate dehydrogenase (E1), dihydrolipoamide acetyltransferase (E2) and lipoamide dehydrogenase (E3). Thiamine diphosphate is required as a cofactor.

The enzyme catalyses N(6)-[(R)-lipoyl]-L-lysyl-[protein] + pyruvate + H(+) = N(6)-[(R)-S(8)-acetyldihydrolipoyl]-L-lysyl-[protein] + CO2. In terms of biological role, component of the pyruvate dehydrogenase (PDH) complex, that catalyzes the overall conversion of pyruvate to acetyl-CoA and CO(2). The polypeptide is Pyruvate dehydrogenase E1 component (aceE) (Buchnera aphidicola subsp. Baizongia pistaciae (strain Bp)).